Here is a 118-residue protein sequence, read N- to C-terminus: Ribonuclease P protein component (118 aa).

It belongs to the RnpA family. As to quaternary structure, consists of a catalytic RNA component (M1 or rnpB) and a protein subunit.

It catalyses the reaction Endonucleolytic cleavage of RNA, removing 5'-extranucleotides from tRNA precursor.. In terms of biological role, RNaseP catalyzes the removal of the 5'-leader sequence from pre-tRNA to produce the mature 5'-terminus. It can also cleave other RNA substrates such as 4.5S RNA. The protein component plays an auxiliary but essential role in vivo by binding to the 5'-leader sequence and broadening the substrate specificity of the ribozyme. The polypeptide is Ribonuclease P protein component (Rickettsia felis (strain ATCC VR-1525 / URRWXCal2) (Rickettsia azadi)).